A 158-amino-acid polypeptide reads, in one-letter code: Transcriptional repressor NrdR (158 aa).

Residues 1-20 (MRCPYCQSEDTQVKDSRPAE) are disordered. Residues 3–34 (CPYCQSEDTQVKDSRPAEDGAVIRRRRVCSVC) fold into a zinc finger. Over residues 11–20 (TQVKDSRPAE) the composition is skewed to basic and acidic residues. An ATP-cone domain is found at 49–139 (LMVVKKSGRR…VYRNFSKAVD (91 aa)).

This sequence belongs to the NrdR family. It depends on Zn(2+) as a cofactor.

Negatively regulates transcription of bacterial ribonucleotide reductase nrd genes and operons by binding to NrdR-boxes. This Brucella anthropi (strain ATCC 49188 / DSM 6882 / CCUG 24695 / JCM 21032 / LMG 3331 / NBRC 15819 / NCTC 12168 / Alc 37) (Ochrobactrum anthropi) protein is Transcriptional repressor NrdR.